Consider the following 456-residue polypeptide: Palmitoyltransferase PFA4 (456 aa).

The Cytoplasmic segment spans residues 1-9 (MAARNWSRV). The chain crosses the membrane as a helical span at residues 10–30 (WVGGTVILISFIAFSSQIFVI). The Lumenal portion of the chain corresponds to 31–37 (WPWYGRE). The chain crosses the membrane as a helical span at residues 38–58 (ISLDLLMLLVPLNLAAFMIFW). At 59–138 (NYRLCVITSP…GNCVGFYNQG (80 aa)) the chain is on the cytoplasmic side. The region spanning 95 to 145 (RYCKNCAHYKPPRAHHCRQCKTCWLKLDHHCPWIGNCVGFYNQGHFIRFLL) is the DHHC domain. Cys-125 acts as the S-palmitoyl cysteine intermediate in catalysis. Residues 139 to 159 (HFIRFLLWVDIGTTFHLIIMV) traverse the membrane as a helical segment. At 160–176 (RRVLYIAEYYHEPTLAD) the chain is on the lumenal side. A helical transmembrane segment spans residues 177–197 (VLFLVFNFATCVPVWLCVGMF). Over 198 to 456 (SIYHVYLACG…DPEEESGYTH (259 aa)) the chain is Cytoplasmic. Residues 284–377 (PPQDPSRLPN…YDHYDEGPMY (94 aa)) form a disordered region. Residues 285–298 (PQDPSRLPNPPPIP) show a composition bias toward pro residues. Residues 309-321 (NGFNPNLRPTNSL) are compositionally biased toward polar residues. Positions 337–352 (SHEQGRHYSSGDERDN) are enriched in basic and acidic residues.

This sequence belongs to the DHHC palmitoyltransferase family. PFA4 subfamily.

It localises to the endoplasmic reticulum membrane. The enzyme catalyses L-cysteinyl-[protein] + hexadecanoyl-CoA = S-hexadecanoyl-L-cysteinyl-[protein] + CoA. Functionally, mediates the reversible addition of palmitate to target proteins, thereby regulating their membrane association and biological function. Responsible for the modification of a subset of proteins that are critical in cryptococcal pathogenesis, with substrates involved in cell wall synthesis, signal transduction, and membrane trafficking. Palmitoylates chitin synthase CHS3. The sequence is that of Palmitoyltransferase PFA4 from Cryptococcus neoformans var. grubii serotype A (strain H99 / ATCC 208821 / CBS 10515 / FGSC 9487) (Filobasidiella neoformans var. grubii).